The sequence spans 182 residues: Riboflavin kinase (182 aa).

Threonine 39 and asparagine 41 together coordinate Mg(2+). Catalysis depends on glutamate 117, which acts as the Nucleophile.

The protein belongs to the flavokinase family. Requires Zn(2+) as cofactor. Mg(2+) is required as a cofactor.

The catalysed reaction is riboflavin + ATP = FMN + ADP + H(+). It functions in the pathway cofactor biosynthesis; FMN biosynthesis; FMN from riboflavin (ATP route): step 1/1. In terms of biological role, catalyzes the phosphorylation of riboflavin (vitamin B2) to form flavin mononucleotide (FMN) coenzyme. In Lodderomyces elongisporus (strain ATCC 11503 / CBS 2605 / JCM 1781 / NBRC 1676 / NRRL YB-4239) (Yeast), this protein is Riboflavin kinase (FMN1).